Reading from the N-terminus, the 430-residue chain is Tol-Pal system protein TolB (430 aa).

The signal sequence occupies residues 1 to 21; it reads MKQALRVAFGFLMLWAAVLHA.

Belongs to the TolB family. In terms of assembly, the Tol-Pal system is composed of five core proteins: the inner membrane proteins TolA, TolQ and TolR, the periplasmic protein TolB and the outer membrane protein Pal. They form a network linking the inner and outer membranes and the peptidoglycan layer.

Its subcellular location is the periplasm. Functionally, part of the Tol-Pal system, which plays a role in outer membrane invagination during cell division and is important for maintaining outer membrane integrity. TolB occupies a key intermediary position in the Tol-Pal system because it communicates directly with both membrane-embedded components, Pal in the outer membrane and TolA in the inner membrane. This Salmonella typhi protein is Tol-Pal system protein TolB.